The chain runs to 142 residues: Large ribosomal subunit protein uL13 (142 aa).

The protein belongs to the universal ribosomal protein uL13 family. Part of the 50S ribosomal subunit.

In terms of biological role, this protein is one of the early assembly proteins of the 50S ribosomal subunit, although it is not seen to bind rRNA by itself. It is important during the early stages of 50S assembly. The chain is Large ribosomal subunit protein uL13 from Citrifermentans bemidjiense (strain ATCC BAA-1014 / DSM 16622 / JCM 12645 / Bem) (Geobacter bemidjiensis).